A 404-amino-acid chain; its full sequence is Deoxyguanosinetriphosphate triphosphohydrolase-like protein 1 (404 aa).

In terms of domain architecture, HD spans 75-219; it reads RLTHSIEVAQ…AAIADDIAYN (145 aa).

This sequence belongs to the dGTPase family. Type 2 subfamily.

The polypeptide is Deoxyguanosinetriphosphate triphosphohydrolase-like protein 1 (Mesorhizobium japonicum (strain LMG 29417 / CECT 9101 / MAFF 303099) (Mesorhizobium loti (strain MAFF 303099))).